The sequence spans 217 residues: Small ribosomal subunit protein uS3 (217 aa).

In terms of domain architecture, KH type-2 spans 38–106; sequence IRKFVQKELA…QVHINIIEIK (69 aa).

It belongs to the universal ribosomal protein uS3 family. In terms of assembly, part of the 30S ribosomal subunit. Forms a tight complex with proteins S10 and S14.

Its function is as follows. Binds the lower part of the 30S subunit head. Binds mRNA in the 70S ribosome, positioning it for translation. This Streptococcus pneumoniae serotype 19F (strain G54) protein is Small ribosomal subunit protein uS3.